Here is a 295-residue protein sequence, read N- to C-terminus: GTPase Era (295 aa).

An Era-type G domain is found at 4-171 (KSGFVTIIGR…INLIVQYLPE (168 aa)). Residues 12-19 (GRPNVGKS) form a G1 region. 12–19 (GRPNVGKS) contributes to the GTP binding site. The interval 38–42 (QTTRN) is G2. The tract at residues 59–62 (DTPG) is G3. GTP is bound by residues 59 to 63 (DTPGI) and 121 to 124 (NKID). The interval 121 to 124 (NKID) is G4. The interval 150–152 (ISA) is G5. The region spanning 194–280 (IREKILHYTD…YLELWVKVKE (87 aa)) is the KH type-2 domain.

It belongs to the TRAFAC class TrmE-Era-EngA-EngB-Septin-like GTPase superfamily. Era GTPase family. Monomer.

It localises to the cytoplasm. The protein localises to the cell membrane. In terms of biological role, an essential GTPase that binds both GDP and GTP, with rapid nucleotide exchange. Plays a role in 16S rRNA processing and 30S ribosomal subunit biogenesis and possibly also in cell cycle regulation and energy metabolism. The chain is GTPase Era from Alkaliphilus oremlandii (strain OhILAs) (Clostridium oremlandii (strain OhILAs)).